A 420-amino-acid polypeptide reads, in one-letter code: Histidine--tRNA ligase (420 aa).

This sequence belongs to the class-II aminoacyl-tRNA synthetase family. Homodimer.

Its subcellular location is the cytoplasm. It catalyses the reaction tRNA(His) + L-histidine + ATP = L-histidyl-tRNA(His) + AMP + diphosphate + H(+). The polypeptide is Histidine--tRNA ligase (Thermotoga petrophila (strain ATCC BAA-488 / DSM 13995 / JCM 10881 / RKU-1)).